The primary structure comprises 228 residues: Probable septum site-determining protein MinC (228 aa).

The protein belongs to the MinC family. As to quaternary structure, interacts with MinD and FtsZ.

Functionally, cell division inhibitor that blocks the formation of polar Z ring septums. Rapidly oscillates between the poles of the cell to destabilize FtsZ filaments that have formed before they mature into polar Z rings. Prevents FtsZ polymerization. This chain is Probable septum site-determining protein MinC, found in Yersinia enterocolitica serotype O:8 / biotype 1B (strain NCTC 13174 / 8081).